The chain runs to 110 residues: Small ribosomal subunit protein eS24 (110 aa).

Positions 91–110 are disordered; it reads RNKVEEQAEEAEEAEAGAAE. Residues 97 to 110 are compositionally biased toward acidic residues; sequence QAEEAEEAEAGAAE.

It belongs to the eukaryotic ribosomal protein eS24 family.

The chain is Small ribosomal subunit protein eS24 from Archaeoglobus fulgidus (strain ATCC 49558 / DSM 4304 / JCM 9628 / NBRC 100126 / VC-16).